The primary structure comprises 612 residues: MGRLEVLFLGLTCCLAAACAAKLGAVYTEGGFVEGVNKKLSLLGGDSVDIFKGIPFATAKTLENPQRHPGWQGTLKATDFKKRCLQATITQDDTYGQEDCLYLNIWVPQGRKQVSHDLPVMVWIYGGAFLMGSGQGANFLKNYLYDGEEIATRGNVIVVTFNYRVGPLGFLSTGDANLPGNFGLRDQHMAIAWVKRNIAAFGGDPDNITIFGESAGAASVSLQTLSPYNKGLIRRAISQSGVALSPWAIQENPLFWAKTIAKKVGCPTEDTAKMAGCLKITDPRALTLAYRLPLKSQEYPIVHYLAFIPVVDGDFIPDDPINLYDNAADIDYLAGINDMDGHLFATVDVPAIDKAKQDVTEEDFYRLVSGHTVAKGLKGTQATFDIYTESWAQDPSQENMKKTVVAFETDILFLIPTEMALAQHRAHAKSAKTYSYLFSHPSRMPIYPKWMGADHADDLQYVFGKPFATPLGYRAQDRTVSKAMIAYWTNFAKSGDPNMGNSPVPTHWYPYTTENGNYLDINKKITSTSMKEHLREKFLKFWAVTFEMLPTVVGDHTPPEDDSEAAPVPPTDDSQGGPVPPTDDSQTTPVPPTDNSQAGDSVEAQMPGPIGF.

The first 20 residues, 1-20, serve as a signal peptide directing secretion; it reads MGRLEVLFLGLTCCLAAACA. C84 and C100 form a disulfide bridge. A glycan (N-linked (GlcNAc...) asparagine) is linked at N207. S214 (acyl-ester intermediate) is an active-site residue. C266 and C277 are disulfide-bonded. Catalysis depends on charge relay system residues D340 and H455. The disordered stretch occupies residues 553–612; that stretch reads VGDHTPPEDDSEAAPVPPTDDSQGGPVPPTDDSQTTPVPPTDNSQAGDSVEAQMPGPIGF. Tandem repeats lie at residues 556–566, 567–577, 578–588, and 589–599. The 4 X 11 AA tandem repeats, O-glycosylated region stretch occupies residues 556–599; the sequence is HTPPEDDSEAAPVPPTDDSQGGPVPPTDDSQTTPVPPTDNSQAG. Residues 583–599 are compositionally biased toward polar residues; sequence DDSQTTPVPPTDNSQAG.

This sequence belongs to the type-B carboxylesterase/lipase family. As to quaternary structure, interacts with CLC. In terms of tissue distribution, synthesized primarily in the pancreas and then transported to the intestine.

The protein localises to the secreted. The catalysed reaction is a triacylglycerol + H2O = a diacylglycerol + a fatty acid + H(+). It carries out the reaction 1,2,3-tri-(9Z-octadecenoyl)-glycerol + H2O = di-(9Z)-octadecenoylglycerol + (9Z)-octadecenoate + H(+). The enzyme catalyses 1,2,3-trioctanoylglycerol + H2O = dioctanoylglycerol + octanoate + H(+). It catalyses the reaction a sterol ester + H2O = a sterol + a fatty acid + H(+). The catalysed reaction is cholesteryl (9Z-octadecenoate) + H2O = cholesterol + (9Z)-octadecenoate + H(+). It carries out the reaction an acetyl ester + H2O = an aliphatic alcohol + acetate + H(+). The enzyme catalyses a butanoate ester + H2O = an aliphatic alcohol + butanoate + H(+). It catalyses the reaction 9-hexadecanoyloxy-octadecanoate + H2O = 9-hydroxy-octadecanoate + hexadecanoate + H(+). The catalysed reaction is 9-(9Z-octadecenoyloxy)-octadecanoate + H2O = 9-hydroxy-octadecanoate + (9Z)-octadecenoate + H(+). It carries out the reaction 1-hexadecanoyl-sn-glycero-3-phosphocholine + H2O = sn-glycerol 3-phosphocholine + hexadecanoate + H(+). The enzyme catalyses 12-hexadecanoyloxy-octadecanoate + H2O = 12-hydroxyoctadecanoate + hexadecanoate + H(+). It catalyses the reaction 12-(9Z-octadecenoyloxy)-octadecanoate + H2O = 12-hydroxyoctadecanoate + (9Z)-octadecenoate + H(+). The catalysed reaction is 13-(9Z-octadecenoyloxy)-octadecanoate + H2O = 13-hydroxy-octadecanoate + (9Z)-octadecenoate + H(+). It carries out the reaction 9-(9Z-hexadecenoyloxy)-octadecanoate + H2O = (9Z)-hexadecenoate + 9-hydroxy-octadecanoate + H(+). The enzyme catalyses 12-(9Z-hexadecenoyloxy)-octadecanoate + H2O = 12-hydroxyoctadecanoate + (9Z)-hexadecenoate + H(+). It catalyses the reaction 13-(9Z-hexadecenoyloxy)-octadecanoate + H2O = 13-hydroxy-octadecanoate + (9Z)-hexadecenoate + H(+). The catalysed reaction is 12-octadecanoyloxy-octadecanoate + H2O = 12-hydroxyoctadecanoate + octadecanoate + H(+). It carries out the reaction 13-octadecanoyloxy-octadecanoate + H2O = 13-hydroxy-octadecanoate + octadecanoate + H(+). The enzyme catalyses 5-(9Z-hexadecenoyloxy)-octadecanoate + H2O = 5-hydroxy-octadecanoate + (9Z)-hexadecenoate + H(+). It catalyses the reaction 9-octadecanoyloxy-octadecanoate + H2O = 9-hydroxy-octadecanoate + octadecanoate + H(+). With respect to regulation, activated by bile salts such as sodium taurocholate. Functionally, catalyzes the hydrolysis of a wide range of substrates including cholesteryl esters, phospholipids, lysophospholipids, di- and tri-acylglycerols, and fatty acid esters of hydroxy fatty acids (FAHFA). Preferentially hydrolyzes FAHFAs with the ester bond further away from the carboxylate. Unsaturated FAHFAs are hydrolyzed more quickly than saturated FAHFAs. Has an essential role in the complete digestion of dietary lipids and their intestinal absorption, along with the absorption of fat-soluble vitamins. The chain is Bile salt-activated lipase (Cel) from Rattus norvegicus (Rat).